A 277-amino-acid chain; its full sequence is Large ribosomal subunit protein uL2 (277 aa).

A disordered region spans residues 199-277; it reads DHGNINDGKA…ILRSRHQRKS (79 aa).

This sequence belongs to the universal ribosomal protein uL2 family. As to quaternary structure, part of the 50S ribosomal subunit. Forms a bridge to the 30S subunit in the 70S ribosome.

Functionally, one of the primary rRNA binding proteins. Required for association of the 30S and 50S subunits to form the 70S ribosome, for tRNA binding and peptide bond formation. It has been suggested to have peptidyltransferase activity; this is somewhat controversial. Makes several contacts with the 16S rRNA in the 70S ribosome. This chain is Large ribosomal subunit protein uL2, found in Mesorhizobium japonicum (strain LMG 29417 / CECT 9101 / MAFF 303099) (Mesorhizobium loti (strain MAFF 303099)).